The primary structure comprises 659 residues: Methionine--tRNA ligase (659 aa).

The 'HIGH' region motif lies at 13–23 (YYPSGNLHIGH). The 'KMSKS' region signature appears at 308 to 312 (KMSKS). K311 contributes to the ATP binding site. Residues 559 to 659 (DFDKVEIKAA…SAIPNGAVIK (101 aa)) form the tRNA-binding domain.

The protein belongs to the class-I aminoacyl-tRNA synthetase family. MetG type 2B subfamily. Homodimer.

It localises to the cytoplasm. The catalysed reaction is tRNA(Met) + L-methionine + ATP = L-methionyl-tRNA(Met) + AMP + diphosphate. Its function is as follows. Is required not only for elongation of protein synthesis but also for the initiation of all mRNA translation through initiator tRNA(fMet) aminoacylation. This Staphylococcus haemolyticus (strain JCSC1435) protein is Methionine--tRNA ligase.